We begin with the raw amino-acid sequence, 597 residues long: Gigaxonin (597 aa).

The BTB domain maps to 30 to 99 (CDAHLVLDGE…IFSGQIRLNE (70 aa)). The region spanning 134–236 (CIGIRDFALH…DSSYLREQML (103 aa)) is the BACK domain. Kelch repeat units follow at residues 274-326 (CIVT…SAEG), 327-374 (FLFV…EIDG), 376-421 (LYIL…AMKK), 422-468 (KIYA…GVAM), 470-522 (LYVF…VYGA), and 528-574 (SIYV…AALR).

Interacts with TBCB. Interacts with CUL3. Part of a complex that contains CUL3, RBX1 and GAN. Interacts (via BTB domain) with UBA1. Interacts (via Kelch domains) with MAP1B (via C-terminus) and MAP1S (via C-terminus). Post-translationally, ubiquitinated by E3 ubiquitin ligase complex formed by CUL3 and RBX1 and probably targeted for proteasome-independent degradation. As to expression, expressed in brain, heart and muscle (at protein level).

The protein resides in the cytoplasm. Its subcellular location is the cytoskeleton. The protein operates within protein modification; protein ubiquitination. Probable cytoskeletal component that directly or indirectly plays an important role in neurofilament architecture. May act as a substrate-specific adapter of an E3 ubiquitin-protein ligase complex which mediates the ubiquitination and subsequent proteasomal degradation of target proteins. Controls degradation of TBCB. Controls degradation of MAP1B and MAP1S, and is critical for neuronal maintenance and survival. The sequence is that of Gigaxonin from Mus musculus (Mouse).